Here is a 253-residue protein sequence, read N- to C-terminus: Ubiquinone/menaquinone biosynthesis C-methyltransferase UbiE (253 aa).

Residues Thr76, Asp97, 125–126 (NA), and Ser142 each bind S-adenosyl-L-methionine.

Belongs to the class I-like SAM-binding methyltransferase superfamily. MenG/UbiE family.

It carries out the reaction a 2-demethylmenaquinol + S-adenosyl-L-methionine = a menaquinol + S-adenosyl-L-homocysteine + H(+). It catalyses the reaction a 2-methoxy-6-(all-trans-polyprenyl)benzene-1,4-diol + S-adenosyl-L-methionine = a 5-methoxy-2-methyl-3-(all-trans-polyprenyl)benzene-1,4-diol + S-adenosyl-L-homocysteine + H(+). It functions in the pathway quinol/quinone metabolism; menaquinone biosynthesis; menaquinol from 1,4-dihydroxy-2-naphthoate: step 2/2. Its pathway is cofactor biosynthesis; ubiquinone biosynthesis. Methyltransferase required for the conversion of demethylmenaquinol (DMKH2) to menaquinol (MKH2) and the conversion of 2-polyprenyl-6-methoxy-1,4-benzoquinol (DDMQH2) to 2-polyprenyl-3-methyl-6-methoxy-1,4-benzoquinol (DMQH2). In Xanthomonas oryzae pv. oryzae (strain MAFF 311018), this protein is Ubiquinone/menaquinone biosynthesis C-methyltransferase UbiE.